The following is a 357-amino-acid chain: sn-glycerol-3-phosphate import ATP-binding protein UgpC (357 aa).

One can recognise an ABC transporter domain in the interval 4 to 235 (LKLQAVTKSY…PASLFVASFI (232 aa)). 37–44 (GPSGCGKS) contributes to the ATP binding site.

It belongs to the ABC transporter superfamily. sn-glycerol-3-phosphate importer (TC 3.A.1.1.3) family. In terms of assembly, the complex is composed of two ATP-binding proteins (UgpC), two transmembrane proteins (UgpA and UgpE) and a solute-binding protein (UgpB).

It is found in the cell inner membrane. The enzyme catalyses sn-glycerol 3-phosphate(out) + ATP + H2O = sn-glycerol 3-phosphate(in) + ADP + phosphate + H(+). Its function is as follows. Part of the ABC transporter complex UgpBAEC involved in sn-glycerol-3-phosphate (G3P) import. Responsible for energy coupling to the transport system. This chain is sn-glycerol-3-phosphate import ATP-binding protein UgpC, found in Yersinia pseudotuberculosis serotype I (strain IP32953).